Consider the following 113-residue polypeptide: uncharacterized protein (113 aa).

The disordered stretch occupies residues 28-55 (CDGGPRRPLSRRGEEARRARAPSYEEQE).

This is an uncharacterized protein from Human cytomegalovirus (strain AD169) (HHV-5).